Reading from the N-terminus, the 264-residue chain is Undecaprenyl-diphosphatase (264 aa).

Helical transmembrane passes span 1–21 (MEISHVIVLALVQGISEFLPI), 39–59 (QGLAFDVAVHVGTLSAILFYF), 83–103 (SLLVWCVGFATIPVGIFGLLF), 113–133 (SGVVIAVTTIIFGIALYFADL), 143–163 (MTIKFALIIGLAQAVALIPGV), 184–204 (ANFSFLLSIPVIILAGGLESI), 220–240 (LGVIISAVSAYICVKLFMGII), and 243–263 (IRMLPFVIYRLILGAFLLYLF).

It belongs to the UppP family.

The protein localises to the cell inner membrane. The catalysed reaction is di-trans,octa-cis-undecaprenyl diphosphate + H2O = di-trans,octa-cis-undecaprenyl phosphate + phosphate + H(+). Its function is as follows. Catalyzes the dephosphorylation of undecaprenyl diphosphate (UPP). Confers resistance to bacitracin. The sequence is that of Undecaprenyl-diphosphatase from Campylobacter concisus (strain 13826).